The sequence spans 168 residues: Small ribosomal subunit protein uS5 (168 aa).

Residues 17 to 80 enclose the S5 DRBM domain; that stretch reads IEDQLVAVNR…EDGKKKMINV (64 aa).

It belongs to the universal ribosomal protein uS5 family. Part of the 30S ribosomal subunit. Contacts proteins S4 and S8.

With S4 and S12 plays an important role in translational accuracy. Functionally, located at the back of the 30S subunit body where it stabilizes the conformation of the head with respect to the body. In Lactobacillus helveticus (strain DPC 4571), this protein is Small ribosomal subunit protein uS5.